The primary structure comprises 226 residues: Putative pyridoxamine 5'-phosphate oxidase (226 aa).

Residue 16-19 coordinates pyridoxal 5'-phosphate; sequence LNSH. 72–75 provides a ligand contact to FMN; the sequence is RMVL. A pyridoxal 5'-phosphate-binding site is contributed by K77. Residues 87 to 88, 93 to 94, and Q116 each bind FMN; these read YT and RK. Pyridoxal 5'-phosphate contacts are provided by Y134, R138, and S142. Residues 151-152 and W199 each bind FMN; that span reads QS. 205-207 provides a ligand contact to pyridoxal 5'-phosphate; sequence RLH. Residue R209 coordinates FMN.

This sequence belongs to the pyridoxamine 5'-phosphate oxidase family. As to quaternary structure, homodimer. FMN is required as a cofactor.

It carries out the reaction pyridoxamine 5'-phosphate + O2 + H2O = pyridoxal 5'-phosphate + H2O2 + NH4(+). The catalysed reaction is pyridoxine 5'-phosphate + O2 = pyridoxal 5'-phosphate + H2O2. Its pathway is cofactor metabolism; pyridoxal 5'-phosphate salvage; pyridoxal 5'-phosphate from pyridoxamine 5'-phosphate: step 1/1. The protein operates within cofactor metabolism; pyridoxal 5'-phosphate salvage; pyridoxal 5'-phosphate from pyridoxine 5'-phosphate: step 1/1. Functionally, catalyzes the oxidation of either pyridoxine 5'-phosphate (PNP) or pyridoxamine 5'-phosphate (PMP) into pyridoxal 5'-phosphate (PLP). This Caenorhabditis elegans protein is Putative pyridoxamine 5'-phosphate oxidase.